The following is a 160-amino-acid chain: Photosystem II extrinsic protein V (160 aa).

Residues 1 to 25 (MKRFILLAIATVFFFCQFQTNPVNA) form the signal peptide. The heme c site is built by Cys-62, Cys-65, His-66, and His-117.

The protein belongs to the cytochrome c family. PsbV subfamily. In terms of assembly, PSII is composed of 1 copy each of membrane proteins PsbA, PsbB, PsbC, PsbD, PsbE, PsbF, PsbH, PsbI, PsbJ, PsbK, PsbL, PsbM, PsbT, PsbX, PsbY, PsbZ, Psb30/Ycf12, peripheral proteins PsbO, CyanoQ (PsbQ), PsbU, PsbV and a large number of cofactors. It forms dimeric complexes. Heme c serves as cofactor.

The protein localises to the cellular thylakoid membrane. Its function is as follows. One of the extrinsic, lumenal subunits of photosystem II (PSII). PSII is a light-driven water plastoquinone oxidoreductase, using light energy to abstract electrons from H(2)O, generating a proton gradient subsequently used for ATP formation. The extrinsic proteins stabilize the structure of photosystem II oxygen-evolving complex (OEC), the ion environment of oxygen evolution and protect the OEC against heat-induced inactivation. Low-potential cytochrome c that plays a role in the OEC of PSII. This is Photosystem II extrinsic protein V from Rippkaea orientalis (strain PCC 8801 / RF-1) (Cyanothece sp. (strain PCC 8801)).